Consider the following 104-residue polypeptide: Flagellar hook-basal body complex protein FliE (104 aa).

Belongs to the FliE family.

The protein resides in the bacterial flagellum basal body. The sequence is that of Flagellar hook-basal body complex protein FliE from Escherichia coli O139:H28 (strain E24377A / ETEC).